Here is a 278-residue protein sequence, read N- to C-terminus: Biotin synthase (278 aa).

Positions 1–227 (MQIMLCAISN…QSVVMVAGGR (227 aa)) constitute a Radical SAM core domain. [4Fe-4S] cluster-binding residues include C16, C20, and C23. Positions 60, 95, and 153 each coordinate [2Fe-2S] cluster.

This sequence belongs to the radical SAM superfamily. Biotin synthase family. Homodimer. It depends on [4Fe-4S] cluster as a cofactor. Requires [2Fe-2S] cluster as cofactor.

It carries out the reaction (4R,5S)-dethiobiotin + (sulfur carrier)-SH + 2 reduced [2Fe-2S]-[ferredoxin] + 2 S-adenosyl-L-methionine = (sulfur carrier)-H + biotin + 2 5'-deoxyadenosine + 2 L-methionine + 2 oxidized [2Fe-2S]-[ferredoxin]. The protein operates within cofactor biosynthesis; biotin biosynthesis; biotin from 7,8-diaminononanoate: step 2/2. In terms of biological role, catalyzes the conversion of dethiobiotin (DTB) to biotin by the insertion of a sulfur atom into dethiobiotin via a radical-based mechanism. The polypeptide is Biotin synthase (Campylobacter jejuni subsp. jejuni serotype O:6 (strain 81116 / NCTC 11828)).